The primary structure comprises 217 residues: 25 kDa ookinete surface antigen (217 aa).

The first 16 residues, 1–16 (MNKLYSLFLFLFIQLS), serve as a signal peptide directing secretion. Residues 30 to 59 (CKRGFLIQMSGHLECKCENDLVLVNEETCE) enclose the EGF-like 1; truncated domain. EGF-like domains lie at 61 to 106 (KVLK…NVCI), 106 to 150 (IPNE…NKCS), and 153 to 193 (GETK…SICT). Intrachain disulfides connect C65–C80, C74–C92, C94–C105, C110–C120, C115–C133, C135–C149, C157–C168, C161–C177, and C179–C192. N112 carries an N-linked (GlcNAc...) asparagine glycan. N-linked (GlcNAc...) asparagine glycosylation is found at N165 and N187. S196 is lipidated: GPI-anchor amidated serine. A propeptide spans 197–217 (AYNILNLSIMFILFSVCFFIM) (removed in mature form). N202 is a glycosylation site (N-linked (GlcNAc...) asparagine).

The protein localises to the cell membrane. The polypeptide is 25 kDa ookinete surface antigen (Plasmodium falciparum (isolate NF54)).